A 601-amino-acid polypeptide reads, in one-letter code: Elongation factor 4 (601 aa).

Positions Ser7–Val189 constitute a tr-type G domain. Residues Asp19 to Thr24 and Asn136 to Asp139 each bind GTP.

The protein belongs to the TRAFAC class translation factor GTPase superfamily. Classic translation factor GTPase family. LepA subfamily.

It is found in the cell inner membrane. The catalysed reaction is GTP + H2O = GDP + phosphate + H(+). Functionally, required for accurate and efficient protein synthesis under certain stress conditions. May act as a fidelity factor of the translation reaction, by catalyzing a one-codon backward translocation of tRNAs on improperly translocated ribosomes. Back-translocation proceeds from a post-translocation (POST) complex to a pre-translocation (PRE) complex, thus giving elongation factor G a second chance to translocate the tRNAs correctly. Binds to ribosomes in a GTP-dependent manner. In Gluconacetobacter diazotrophicus (strain ATCC 49037 / DSM 5601 / CCUG 37298 / CIP 103539 / LMG 7603 / PAl5), this protein is Elongation factor 4.